The chain runs to 236 residues: Ureidoacrylate amidohydrolase RutB (236 aa).

Aspartate 24 serves as the catalytic Proton acceptor. The active site involves lysine 133. The active-site Nucleophile is the cysteine 166.

It belongs to the isochorismatase family. RutB subfamily.

The catalysed reaction is (Z)-3-ureidoacrylate + H2O + H(+) = (Z)-3-aminoacrylate + NH4(+) + CO2. It catalyses the reaction (Z)-3-ureidoacrylate + H2O = (Z)-3-aminoacrylate + carbamate + H(+). The enzyme catalyses (Z)-2-methylureidoacrylate + H2O + H(+) = (Z)-2-methylaminoacrylate + NH4(+) + CO2. Functionally, hydrolyzes ureidoacrylate to form aminoacrylate and carbamate. The carbamate hydrolyzes spontaneously, thereby releasing one of the nitrogen atoms of the pyrimidine ring as ammonia and one of its carbon atoms as CO2. This Klebsiella variicola (strain At-22) protein is Ureidoacrylate amidohydrolase RutB.